We begin with the raw amino-acid sequence, 908 residues long: Protein translocase subunit SecA (908 aa).

ATP contacts are provided by residues Q87, 105-109 (GEGKT), and D512. The interval 865-908 (GGDDGSDEMMAHTPMIRDGDKVGRNDPCPCGSGRKYKQCHGKLS) is disordered. The segment covering 879–888 (MIRDGDKVGR) has biased composition (basic and acidic residues). Residues C892, C894, C903, and H904 each contribute to the Zn(2+) site. Residues 898 to 908 (RKYKQCHGKLS) are compositionally biased toward basic residues.

This sequence belongs to the SecA family. Monomer and homodimer. Part of the essential Sec protein translocation apparatus which comprises SecA, SecYEG and auxiliary proteins SecDF-YajC and YidC. It depends on Zn(2+) as a cofactor.

The protein resides in the cell inner membrane. The protein localises to the cytoplasm. The catalysed reaction is ATP + H2O + cellular proteinSide 1 = ADP + phosphate + cellular proteinSide 2.. Its function is as follows. Part of the Sec protein translocase complex. Interacts with the SecYEG preprotein conducting channel. Has a central role in coupling the hydrolysis of ATP to the transfer of proteins into and across the cell membrane, serving both as a receptor for the preprotein-SecB complex and as an ATP-driven molecular motor driving the stepwise translocation of polypeptide chains across the membrane. The polypeptide is Protein translocase subunit SecA (Shewanella sp. (strain ANA-3)).